The chain runs to 464 residues: MSDLVPLSRKPAPAAGGPAPSPAAPPRKVYVHTFGCQMNESDSDRMVELLGRHAYARAASADEADLILLNTCAVREKAEQKLLSALGRYREVKARRGALIAVSGCVAQQEKDRLLARVPYVDFVFGPDNIGRLPEMVERARDERFAETGWMDSEEYVFPRADPEAARGRVTAFVTAMKGCDNVCAFCIVPHTRGREVSRPFPDVVAECAALAGVGVREVTLIGQNVNSYTGGCTFADLLRRVAAVPGIDRIRFTTSHPHDLSDALVEVFRDEPKVMPHFHLPVQSGSDAVLRRMRRDYSVAEYLDRFDRLRAARPGIAITTDFIVGFPGETDADFEASLALLERARFEQSFSFVFSPRPHTVAAVRLGSAPEWRDVPREAAVARLERLLAAQRRIAGEILAGELGKVVEVLVEGPSDEPGERLGRTPENRVVHLAADEAAAPAGARVAVRITRAGGSSLSGTLA.

Residues Met1–Ala24 form a disordered region. Positions Ser8–Pro18 are enriched in low complexity. An MTTase N-terminal domain is found at Arg27 to Asp142. [4Fe-4S] cluster contacts are provided by Cys36, Cys72, Cys105, Cys180, Cys184, and Cys187. A Radical SAM core domain is found at Ala166–Glu398. The 64-residue stretch at Ala401–Ala464 folds into the TRAM domain.

It belongs to the methylthiotransferase family. MiaB subfamily. In terms of assembly, monomer. The cofactor is [4Fe-4S] cluster.

Its subcellular location is the cytoplasm. The enzyme catalyses N(6)-dimethylallyladenosine(37) in tRNA + (sulfur carrier)-SH + AH2 + 2 S-adenosyl-L-methionine = 2-methylsulfanyl-N(6)-dimethylallyladenosine(37) in tRNA + (sulfur carrier)-H + 5'-deoxyadenosine + L-methionine + A + S-adenosyl-L-homocysteine + 2 H(+). Its function is as follows. Catalyzes the methylthiolation of N6-(dimethylallyl)adenosine (i(6)A), leading to the formation of 2-methylthio-N6-(dimethylallyl)adenosine (ms(2)i(6)A) at position 37 in tRNAs that read codons beginning with uridine. The protein is tRNA-2-methylthio-N(6)-dimethylallyladenosine synthase of Anaeromyxobacter sp. (strain K).